A 634-amino-acid chain; its full sequence is Acetylcholinesterase (634 aa).

Residues 1 to 23 (MKTSDILLLPTVLLTFLFHNCFA) form the signal peptide. A disulfide bond links cysteine 91 and cysteine 118. 2 N-linked (GlcNAc...) asparagine glycosylation sites follow: asparagine 133 and asparagine 184. The active-site Acyl-ester intermediate is the serine 225. Cysteine 279 and cysteine 290 are joined by a disulfide. Asparagine 283 is a glycosylation site (N-linked (GlcNAc...) asparagine). Residue glutamate 352 is the Charge relay system of the active site. The N-linked (GlcNAc...) asparagine glycan is linked to asparagine 368. Cysteine 427 and cysteine 580 are disulfide-bonded. Catalysis depends on histidine 495, which acts as the Charge relay system. N-linked (GlcNAc...) asparagine glycans are attached at residues asparagine 512 and asparagine 592.

This sequence belongs to the type-B carboxylesterase/lipase family. Dimers and collagen-tailed forms, in which catalytic tetramers are associated with anchoring proteins that attach them to the basal lamina or to cell membranes. In the collagen-tailed forms, subunits are associated with a specific collagen, COLQ, which triggers the formation of isoform T tetramers from dimers.

Its subcellular location is the synapse. The protein resides in the secreted. It localises to the cell membrane. The catalysed reaction is acetylcholine + H2O = choline + acetate + H(+). Terminates signal transduction at the neuromuscular junction by rapid hydrolysis of the acetylcholine released into the synaptic cleft. This is Acetylcholinesterase (ache) from Danio rerio (Zebrafish).